Here is a 366-residue protein sequence, read N- to C-terminus: DNA integrity scanning protein DisA (366 aa).

A DAC domain is found at 21-159; that stretch reads VHTLKGTLQR…EGKAHMLEQP (139 aa). Residues G88, L106, and 119–123 each bind ATP; that span reads TRHRS.

It belongs to the DisA family. In terms of assembly, homooctamer. The cofactor is Mg(2+).

It catalyses the reaction 2 ATP = 3',3'-c-di-AMP + 2 diphosphate. Functionally, participates in a DNA-damage check-point. DisA forms globular foci that rapidly scan along the chromosomes searching for lesions. Also has diadenylate cyclase activity, catalyzing the condensation of 2 ATP molecules into cyclic di-AMP (c-di-AMP). c-di-AMP likely acts as a signaling molecule that may couple DNA integrity with a cellular process. In Corynebacterium glutamicum (strain R), this protein is DNA integrity scanning protein DisA.